Reading from the N-terminus, the 246-residue chain is Probable transcriptional regulatory protein WRi_002620 (246 aa).

The interval 1 to 22 is disordered; sequence MAGHSQFSNIKHRKGAQDAKRS.

The protein belongs to the TACO1 family.

The protein resides in the cytoplasm. The chain is Probable transcriptional regulatory protein WRi_002620 from Wolbachia sp. subsp. Drosophila simulans (strain wRi).